The primary structure comprises 234 residues: tRNA1(Val) (adenine(37)-N6)-methyltransferase (234 aa).

The protein belongs to the methyltransferase superfamily. tRNA (adenine-N(6)-)-methyltransferase family.

Its subcellular location is the cytoplasm. The enzyme catalyses adenosine(37) in tRNA1(Val) + S-adenosyl-L-methionine = N(6)-methyladenosine(37) in tRNA1(Val) + S-adenosyl-L-homocysteine + H(+). Its function is as follows. Specifically methylates the adenine in position 37 of tRNA(1)(Val) (anticodon cmo5UAC). The protein is tRNA1(Val) (adenine(37)-N6)-methyltransferase of Flavobacterium psychrophilum (strain ATCC 49511 / DSM 21280 / CIP 103535 / JIP02/86).